Reading from the N-terminus, the 364-residue chain is Chorismate synthase (364 aa).

Positions 41–60 are disordered; it reads MQHDLDRRRPGTSRYTTARR. Residues arginine 48 and arginine 54 each coordinate NADP(+). Residues 125–127, 238–239, glycine 278, 293–297, and arginine 319 each bind FMN; these read RSS, NA, and KPTSS.

This sequence belongs to the chorismate synthase family. As to quaternary structure, homotetramer. FMNH2 serves as cofactor.

The catalysed reaction is 5-O-(1-carboxyvinyl)-3-phosphoshikimate = chorismate + phosphate. It participates in metabolic intermediate biosynthesis; chorismate biosynthesis; chorismate from D-erythrose 4-phosphate and phosphoenolpyruvate: step 7/7. Its function is as follows. Catalyzes the anti-1,4-elimination of the C-3 phosphate and the C-6 proR hydrogen from 5-enolpyruvylshikimate-3-phosphate (EPSP) to yield chorismate, which is the branch point compound that serves as the starting substrate for the three terminal pathways of aromatic amino acid biosynthesis. This reaction introduces a second double bond into the aromatic ring system. This Shewanella putrefaciens (strain CN-32 / ATCC BAA-453) protein is Chorismate synthase.